The chain runs to 108 residues: Mitochondrial import inner membrane translocase subunit tim13 (108 aa).

Residues 52-75 carry the Twin CX3C motif motif; it reads CFENCITAPGSSLSASESTCLSSC. 2 cysteine pairs are disulfide-bonded: Cys-52–Cys-75 and Cys-56–Cys-71.

This sequence belongs to the small Tim family. Heterohexamer; composed of 3 copies of TIM8 and 3 copies of TIM13, named soluble 70 kDa complex. Associates with the TIM22 complex, whose core is composed of TIM22 and TIM54. Interacts with the transmembrane regions of multi-pass transmembrane proteins in transit.

It is found in the mitochondrion inner membrane. Functionally, mitochondrial intermembrane chaperone that participates in the import and insertion of some multi-pass transmembrane proteins into the mitochondrial inner membrane. Also required for the transfer of beta-barrel precursors from the TOM complex to the sorting and assembly machinery (SAM complex) of the outer membrane. Acts as a chaperone-like protein that protects the hydrophobic precursors from aggregation and guide them through the mitochondrial intermembrane space. The TIM8-TIM13 complex is non essential and only mediates the import of few proteins, while the predominant TIM9-TIM10 70 kDa complex is crucial and mediates the import of much more proteins. The polypeptide is Mitochondrial import inner membrane translocase subunit tim13 (tim13) (Emericella nidulans (strain FGSC A4 / ATCC 38163 / CBS 112.46 / NRRL 194 / M139) (Aspergillus nidulans)).